Consider the following 652-residue polypeptide: Protein phosphatase Slingshot homolog 3 (652 aa).

Residues 1-16 show a composition bias toward polar residues; it reads MALVTVSRSPPASGHS. Positions 1-31 are disordered; that stretch reads MALVTVSRSPPASGHSTPVGPTDRVIRRRGR. Alanine 2 is modified (N-acetylalanine). A phosphoserine mark is found at serine 9, serine 37, serine 85, and serine 87. The tract at residues 43-91 is disordered; that stretch reads GAVLGLQDGGEGNDAAEADPEPMEKPSGEEQPAEDQTDNGQGSQSPWKQ. Residues 80 to 90 are compositionally biased toward polar residues; it reads DNGQGSQSPWK. A DEK-C domain is found at 266–321; that stretch reads EQMEQAILAELWQVLDASDLDSVTSKEIRQALELRLGCPLQQYRDFIDNQMLLLMA. The Tyrosine-protein phosphatase domain occupies 325-466; it reads RASRIFPHLY…LQTYQGILTA (142 aa). Catalysis depends on cysteine 410, which acts as the Phosphocysteine intermediate. 3 disordered regions span residues 484 to 526, 540 to 580, and 610 to 652; these read EPLA…LGLR, LLEP…KGGQ, and RAFQ…EGKA. A compositionally biased stretch (low complexity) spans 540–552; the sequence is LLEPSSEPESTTE. Residues 642-652 show a composition bias toward basic and acidic residues; sequence SVDDSREEGKA.

This sequence belongs to the protein-tyrosine phosphatase family. In terms of assembly, does not bind to, or colocalize with, filamentous actin.

The protein localises to the cytoplasm. Its subcellular location is the cytoskeleton. It localises to the nucleus. The enzyme catalyses O-phospho-L-tyrosyl-[protein] + H2O = L-tyrosyl-[protein] + phosphate. It catalyses the reaction O-phospho-L-seryl-[protein] + H2O = L-seryl-[protein] + phosphate. It carries out the reaction O-phospho-L-threonyl-[protein] + H2O = L-threonyl-[protein] + phosphate. Functionally, protein phosphatase which may play a role in the regulation of actin filament dynamics. Can dephosphorylate and activate the actin binding/depolymerizing factor cofilin, which subsequently binds to actin filaments and stimulates their disassembly. This Rattus norvegicus (Rat) protein is Protein phosphatase Slingshot homolog 3 (Ssh3).